We begin with the raw amino-acid sequence, 632 residues long: Chaperone protein HtpG (632 aa).

Positions 1–339 (MAHETMSFQA…SADLPLNVSR (339 aa)) are a; substrate-binding. Positions 340-559 (EILQESRDVK…DNDMSGYLQR (220 aa)) are b. Residues 560–632 (MLKAAGQNAP…TNALLLSRAA (73 aa)) form a c region.

It belongs to the heat shock protein 90 family. As to quaternary structure, homodimer.

It is found in the cytoplasm. Its function is as follows. Molecular chaperone. Has ATPase activity. The polypeptide is Chaperone protein HtpG (Burkholderia ambifaria (strain ATCC BAA-244 / DSM 16087 / CCUG 44356 / LMG 19182 / AMMD) (Burkholderia cepacia (strain AMMD))).